The primary structure comprises 447 residues: Clusterin (447 aa).

Residues 1–21 (MKILLLCVALLLTWDNGMVLG) form the signal peptide. The short motif at 77-80 (KKKK) is the Nuclear localization signal element. Disulfide bonds link C101/C312, C112/C304, C115/C301, C120/C294, and C128/C284. A glycan (N-linked (GlcNAc...) asparagine) is linked at N102. Position 132 is a phosphoserine (S132). N144, N290, N327, N353, and N373 each carry an N-linked (GlcNAc...) asparagine glycan. Residue S394 is modified to Phosphoserine. The short motif at 441–445 (RRKSR) is the Nuclear localization signal element.

The protein belongs to the clusterin family. Antiparallel disulfide-linked heterodimer of an alpha chain and a beta chain. Self-associates and forms higher oligomers. Interacts with a broad range of misfolded proteins, including APP, APOC2 and LYZ. Slightly acidic pH promotes interaction with misfolded proteins. Forms high-molecular weight oligomers upon interaction with misfolded proteins. Interacts with APOA1, LRP2, CLUAP1 and PON1. Interacts with the complement membrane attack complex. Interacts (via alpha chain) with XRCC6. Interacts with SYVN1, COMMD1, BTRC, CUL1 and with ubiquitin and SCF (SKP1-CUL1-F-box protein) E3 ubiquitin-protein ligase complexes. Interacts (via alpha chain) with BAX in stressed cells, where BAX undergoes a conformation change leading to association with the mitochondrial membrane. Does not interact with BAX in unstressed cells. Found in a complex with LTF, CLU, EPPIN and SEMG1. Interacts (immaturely glycosylated pre-secreted form) with HSPA5; this interaction promotes CLU stability and facilitates stress-induced CLU retrotranslocation from the secretory pathway to the mitochondria, thereby reducing stress-induced apoptosis by stabilizing mitochondrial membrane integrity. Interacts with BCL2L1; this interaction releases and activates BAX and promotes cell death. Interacts with TGFBR2 and ACVR1. Interacts (secreted form) with STMN3; this interaction may act as an important modulator during neuronal differentiation. Interacts with VLDLR and LRP8. Post-translationally, proteolytically cleaved on its way through the secretory system, probably within the Golgi lumen. Proteolytic cleavage is not necessary for its chaperone activity. All non-secreted forms are not proteolytically cleaved. Chaperone activity of uncleaved forms is dependent on a non-reducing environment. Polyubiquitinated, leading to proteasomal degradation. Under cellular stress, the intracellular level of cleaved form is reduced due to proteasomal degradation. In terms of processing, extensively glycosylated with sulfated N-linked carbohydrates. About 30% of the protein mass is comprised of complex N-linked carbohydrate. Endoplasmic reticulum (ER) stress induces changes in glycosylation status and increases level of hypoglycosylated forms. Core carbohydrates are essential for chaperone activity. Non-secreted forms are hypoglycosylated or unglycosylated. As to expression, detected in Sertoli cells (at protein level). Detected in cultured Sertoli cells, testis, epididymis, liver and brain.

It is found in the secreted. It localises to the nucleus. The protein resides in the cytoplasm. The protein localises to the mitochondrion membrane. Its subcellular location is the cytosol. It is found in the microsome. It localises to the endoplasmic reticulum. The protein resides in the mitochondrion. The protein localises to the perinuclear region. Its subcellular location is the cytoplasmic vesicle. It is found in the secretory vesicle. It localises to the chromaffin granule. Functionally, functions as extracellular chaperone that prevents aggregation of non native proteins. Prevents stress-induced aggregation of blood plasma proteins. Inhibits formation of amyloid fibrils by APP, APOC2, B2M, CALCA, CSN3, SNCA and aggregation-prone LYZ variants (in vitro). Does not require ATP. Maintains partially unfolded proteins in a state appropriate for subsequent refolding by other chaperones, such as HSPA8/HSC70. Does not refold proteins by itself. Binding to cell surface receptors triggers internalization of the chaperone-client complex and subsequent lysosomal or proteasomal degradation. When secreted, protects cells against apoptosis and against cytolysis by complement: inhibits assembly of the complement membrane attack complex (MAC) by preventing polymerization of C9 pore component of the MAC complex. Intracellular forms interact with ubiquitin and SCF (SKP1-CUL1-F-box protein) E3 ubiquitin-protein ligase complexes and promote the ubiquitination and subsequent proteasomal degradation of target proteins. Promotes proteasomal degradation of COMMD1 and IKBKB. Modulates NF-kappa-B transcriptional activity. Following stress, promotes apoptosis. Inhibits apoptosis when associated with the mitochondrial membrane by interference with BAX-dependent release of cytochrome c into the cytoplasm. Plays a role in the regulation of cell proliferation. An intracellular form suppresses stress-induced apoptosis by stabilizing mitochondrial membrane integrity through interaction with HSPA5. Secreted form does not affect caspase or BAX-mediated intrinsic apoptosis and TNF-induced NF-kappa-B-activity. Secreted form act as an important modulator during neuronal differentiation through interaction with STMN3. Plays a role in the clearance of immune complexes that arise during cell injury. In Rattus norvegicus (Rat), this protein is Clusterin.